Here is a 225-residue protein sequence, read N- to C-terminus: Non-structural protein V (225 aa).

Over residues 145–157 the composition is skewed to polar residues; that stretch reads SGPSLTDQASSKD. A disordered region spans residues 145 to 172; the sequence is SGPSLTDQASSKDPNFKRGGEIDGRHKG. The span at 158-169 shows a compositional bias: basic and acidic residues; the sequence is PNFKRGGEIDGR. Positions 174, 193, 197, 209, 211, 214, 218, and 221 each coordinate Zn(2+).

It belongs to the paramyxoviruses V protein family.

It localises to the host cytoplasm. In terms of biological role, plays an essential role in the inhibition of host immune response. Prevents the establishment of cellular antiviral state by blocking interferon-alpha/beta (IFN-alpha/beta) production and signaling pathway. Interacts with host IFIH1/MDA5 and DHX58/LGP2 to inhibit the transduction pathway involved in the activation of IFN-beta promoter, thus protecting the virus against cell antiviral state. Efficiently blocks type I and type II IFN signaling following infection, probably by targeting host STAT1 for proteasomal degradation. This is Non-structural protein V (P/V) from Simian virus 41 (SV41).